The chain runs to 180 residues: Cuticle protein 3 (180 aa).

The first 16 residues, 1–16 (MMKLIVLAAFIGVCAG), serve as a signal peptide directing secretion. Positions 58 to 121 (EQGFRYAYET…PQGAHFPTPP (64 aa)) constitute a Chitin-binding type R&amp;R domain.

The polypeptide is Cuticle protein 3 (Lonomia obliqua (Moth)).